A 332-amino-acid chain; its full sequence is CAX-interacting protein 4 (332 aa).

Residues 33 to 59 (GYDPYAPTSKEEPKTTQQKTEDPENSY) are disordered. The segment covering 41 to 54 (SKEEPKTTQQKTED) has biased composition (basic and acidic residues). The segment at 81–98 (GSCKKCGRVGHLTFQCRN) adopts a CCHC-type zinc-finger fold. Residues 124–133 (IRRGVGKGEV) are compositionally biased toward basic and acidic residues. The segment at 124 to 332 (IRRGVGKGEV…RKRHHRKERE (209 aa)) is disordered. Residues 134 to 153 (EEVSSEEEEESESSDSDVDS) are compositionally biased toward acidic residues. Over residues 154 to 163 (EMERIIAERF) the composition is skewed to basic and acidic residues. Basic residues-rich tracts occupy residues 198 to 214 (RKRRRRSMKKRSSHKRR) and 227 to 236 (SKRRKERRGR). The span at 241 to 250 (DDSDESEDED) shows a compositional bias: acidic residues. Composition is skewed to basic residues over residues 254 to 269 (VKRKSRKEKRRRRSRR) and 314 to 332 (SSKRSEKKSRKRHHRKERE).

As to quaternary structure, interacts with CAX1. As to expression, expressed in leaves, stems and roots, and at lower levels in flowers.

The protein resides in the nucleus. May regulate CAX1 cation transporter. In Arabidopsis thaliana (Mouse-ear cress), this protein is CAX-interacting protein 4 (CXIP4).